Here is a 106-residue protein sequence, read N- to C-terminus: Replication restart protein PriB (106 aa).

The 100-residue stretch at 4 to 103 (TNRLVLSGTV…LHAEQIEFID (100 aa)) folds into the SSB domain.

The protein belongs to the PriB family. As to quaternary structure, homodimer. Interacts with PriA and DnaT. Component of the replication restart primosome. Primosome assembly occurs via a 'hand-off' mechanism. PriA binds to replication forks, subsequently PriB then DnaT bind; DnaT then displaces ssDNA to generate the helicase loading substrate.

Its function is as follows. Involved in the restart of stalled replication forks, which reloads the replicative helicase on sites other than the origin of replication; the PriA-PriB pathway is the major replication restart pathway. During primosome assembly it facilitates complex formation between PriA and DnaT on DNA; stabilizes PriA on DNA. Stimulates the DNA unwinding activity of PriA helicase. The sequence is that of Replication restart protein PriB from Yersinia pestis.